The sequence spans 330 residues: 2-methyl-6-phytyl-1,4-hydroquinone methyltransferase 1, chloroplastic (330 aa).

The transit peptide at 1–45 (MKEMVSSSTFRAPGGLGFLGPSKIGLIPLRNRSGVRSRVKYIAPK) directs the protein to the chloroplast. Over 46-295 (CAVSSARPAS…DVEKPVNPFT (250 aa)) the chain is Chloroplast intermembrane. Residues 107–116 (VVDVGGGTGF) are SAM motif I. Residues 152–165 (VNIIEGDAEDLPYP) are SAM motif II. The segment at 193-206 (RVLKLGGVACLIGP) is SAM motif III. Residues 296 to 316 (FIFRFVMGTICASYYVLVPIY) traverse the membrane as a helical segment. Residues 317 to 330 (MWMKDQIVPKDQPI) are Stromal-facing.

Belongs to the class I-like SAM-binding methyltransferase superfamily. MPBQ/MBSQ MT family.

It localises to the plastid. The protein resides in the chloroplast inner membrane. It carries out the reaction 2-methyl-6-phytyl-1,4-benzene-1,4-diol + S-adenosyl-L-methionine = 2,3-dimethyl-6-phytylbenzene-1,4-diol + S-adenosyl-L-homocysteine + H(+). The enzyme catalyses 2-methyl-6-(all-trans-nonaprenyl)benzene-1,4-diol + S-adenosyl-L-methionine = plastoquinol-9 + S-adenosyl-L-homocysteine + H(+). The catalysed reaction is 6-geranylgeranyl-2-methylbenzene-1,4-diol + S-adenosyl-L-methionine = 6-geranylgeranyl-2,3-dimethylbenzene-1,4-diol + S-adenosyl-L-homocysteine + H(+). The protein operates within cofactor biosynthesis; tocopherol biosynthesis. Its function is as follows. Involved in a key methylation step in both tocopherols (vitamin E) and plastoquinone synthesis. Catalyzes the conversion of 2-methyl-6-phytyl-1,4-hydroquinone (MPBQ) to 2,3-dimethyl-6-phytyl-1,4-hydroquinone (DMPQ, a substrate for tocopherol cyclase), and 2-methyl-6-solanyl-1,4-benzoquinone (MSBQ) to plastoquinone. The chain is 2-methyl-6-phytyl-1,4-hydroquinone methyltransferase 1, chloroplastic (ARSM2) from Oryza sativa subsp. japonica (Rice).